The sequence spans 148 residues: Cytochrome c-type biogenesis protein CcmE (148 aa).

Residues 1–7 (MKPRSKR) lie on the Cytoplasmic side of the membrane. A helical; Signal-anchor for type II membrane protein membrane pass occupies residues 8 to 28 (LLLVAGAVALLVGAVALVLNA). The Periplasmic portion of the chain corresponds to 29 to 148 (FQQNLVFFHT…AQKAAQTVQQ (120 aa)). Heme-binding residues include histidine 123 and tyrosine 127.

Belongs to the CcmE/CycJ family.

The protein resides in the cell inner membrane. Heme chaperone required for the biogenesis of c-type cytochromes. Transiently binds heme delivered by CcmC and transfers the heme to apo-cytochromes in a process facilitated by CcmF and CcmH. This is Cytochrome c-type biogenesis protein CcmE from Aromatoleum aromaticum (strain DSM 19018 / LMG 30748 / EbN1) (Azoarcus sp. (strain EbN1)).